Consider the following 70-residue polypeptide: ATP synthase subunit c (70 aa).

2 helical membrane-spanning segments follow: residues 4-24 (IAAGIAMAGAAIGGGVGDGIV) and 47-67 (FIGVGLVEAMPIIAFVVALMV).

Belongs to the ATPase C chain family. As to quaternary structure, F-type ATPases have 2 components, F(1) - the catalytic core - and F(0) - the membrane proton channel. F(1) has five subunits: alpha(3), beta(3), gamma(1), delta(1), epsilon(1). F(0) has three main subunits: a(1), b(2) and c(10-14). The alpha and beta chains form an alternating ring which encloses part of the gamma chain. F(1) is attached to F(0) by a central stalk formed by the gamma and epsilon chains, while a peripheral stalk is formed by the delta and b chains.

The protein localises to the cell membrane. Functionally, f(1)F(0) ATP synthase produces ATP from ADP in the presence of a proton or sodium gradient. F-type ATPases consist of two structural domains, F(1) containing the extramembraneous catalytic core and F(0) containing the membrane proton channel, linked together by a central stalk and a peripheral stalk. During catalysis, ATP synthesis in the catalytic domain of F(1) is coupled via a rotary mechanism of the central stalk subunits to proton translocation. Its function is as follows. Key component of the F(0) channel; it plays a direct role in translocation across the membrane. A homomeric c-ring of between 10-14 subunits forms the central stalk rotor element with the F(1) delta and epsilon subunits. The chain is ATP synthase subunit c from Levilactobacillus brevis (strain ATCC 367 / BCRC 12310 / CIP 105137 / JCM 1170 / LMG 11437 / NCIMB 947 / NCTC 947) (Lactobacillus brevis).